The primary structure comprises 78 residues: Apolipoprotein C-I (78 aa).

Residues 1–26 form the signal peptide; sequence MRLILCLPVLVVVLLMVLEGPAPAQG.

This sequence belongs to the apolipoprotein C1 family.

It is found in the secreted. Its function is as follows. Inhibitor of lipoprotein binding to the low density lipoprotein (LDL) receptor, LDL receptor-related protein, and very low density lipoprotein (VLDL) receptor. Associates with high density lipoproteins (HDL) and the triacylglycerol-rich lipoproteins in the plasma and makes up about 10% of the protein of the VLDL and 2% of that of HDL. Appears to interfere directly with fatty acid uptake and is also the major plasma inhibitor of cholesteryl ester transfer protein (CETP). Binds free fatty acids and reduces their intracellular esterification. Modulates the interaction of APOE with beta-migrating VLDL and inhibits binding of beta-VLDL to the LDL receptor-related protein. The polypeptide is Apolipoprotein C-I (APOC1) (Acinonyx jubatus (Cheetah)).